The sequence spans 596 residues: Elongation factor 4 (596 aa).

A tr-type G domain is found at 2-184; that stretch reads KHIRNFSIIA…VIVAKIPPPE (183 aa). GTP is bound by residues 14–19 and 131–134; these read DHGKST and NKID.

It belongs to the TRAFAC class translation factor GTPase superfamily. Classic translation factor GTPase family. LepA subfamily.

It is found in the cell inner membrane. It catalyses the reaction GTP + H2O = GDP + phosphate + H(+). Required for accurate and efficient protein synthesis under certain stress conditions. May act as a fidelity factor of the translation reaction, by catalyzing a one-codon backward translocation of tRNAs on improperly translocated ribosomes. Back-translocation proceeds from a post-translocation (POST) complex to a pre-translocation (PRE) complex, thus giving elongation factor G a second chance to translocate the tRNAs correctly. Binds to ribosomes in a GTP-dependent manner. The polypeptide is Elongation factor 4 (Shewanella sp. (strain W3-18-1)).